Here is a 346-residue protein sequence, read N- to C-terminus: Protein phosphatase 1 regulatory subunit 7 (346 aa).

The span at 1-13 (MADEEGETEVQEM) shows a compositional bias: acidic residues. Residues 1–46 (MADEEGETEVQEMEVDRRESDESADDEAKEKPDRVDGGVKNGEVPL) form a disordered region. A compositionally biased stretch (basic and acidic residues) spans 14-37 (EVDRRESDESADDEAKEKPDRVDG). LRR repeat units follow at residues 63–84 (EAED…EVLK), 85–106 (KVKT…EQLV), 107–128 (TLTE…ETLR), 129–150 (DLQI…ESLS), 151–172 (HLQR…GTLT), 173–194 (QLRL…DSLR), 195–216 (ELDS…ETLT), 217–238 (NLTV…QNLV), 239–260 (NLRE…ENNN), 261–282 (KLTT…KHLS), and 283–304 (ELQE…EELS). One can recognise an LRRCT domain in the interval 317-346 (NPLQKDAQYRRKIMLALPSVRQIDATFVRF).

The protein belongs to the SDS22 family.

The protein localises to the nucleus. In terms of biological role, regulatory subunit of protein phosphatase 1. This Xenopus tropicalis (Western clawed frog) protein is Protein phosphatase 1 regulatory subunit 7 (ppp1r7).